The primary structure comprises 420 residues: ATP phosphoribosyltransferase regulatory subunit (420 aa).

Belongs to the class-II aminoacyl-tRNA synthetase family. HisZ subfamily. In terms of assembly, heteromultimer composed of HisG and HisZ subunits.

The protein resides in the cytoplasm. It functions in the pathway amino-acid biosynthesis; L-histidine biosynthesis; L-histidine from 5-phospho-alpha-D-ribose 1-diphosphate: step 1/9. Required for the first step of histidine biosynthesis. May allow the feedback regulation of ATP phosphoribosyltransferase activity by histidine. This is ATP phosphoribosyltransferase regulatory subunit from Bacillus cereus (strain ATCC 10987 / NRS 248).